Reading from the N-terminus, the 175-residue chain is MNAVRRKKLIWVAATLAGAIIAVLLVIYAIGQQTDYYFDPTAIAAGDAPQNKRIRAGGMVVKDSVRRDPNDDLKVQFEITDFNATVPVSYQGILPDLFAENSGVVATGEMQGKVFVASEVLAKHDENYMPPEVAASLKEDHAAKGVTPTSEQFSPAIPVKQTAGEGNHTTSTLQE.

The Cytoplasmic portion of the chain corresponds to 1–8 (MNAVRRKK). A helical; Signal-anchor for type II membrane protein membrane pass occupies residues 9-29 (LIWVAATLAGAIIAVLLVIYA). Over 30–175 (IGQQTDYYFD…GNHTTSTLQE (146 aa)) the chain is Periplasmic. Residues H124 and Y128 each coordinate heme. The disordered stretch occupies residues 142-175 (AAKGVTPTSEQFSPAIPVKQTAGEGNHTTSTLQE).

It belongs to the CcmE/CycJ family.

Its subcellular location is the cell inner membrane. Its function is as follows. Heme chaperone required for the biogenesis of c-type cytochromes. Transiently binds heme delivered by CcmC and transfers the heme to apo-cytochromes in a process facilitated by CcmF and CcmH. The protein is Cytochrome c-type biogenesis protein CcmE of Psychrobacter sp. (strain PRwf-1).